Reading from the N-terminus, the 577-residue chain is MASLVLSLRIAPSTPPLGLGGGRFRGRRGAVACRAATFQQLDAVAVREEESKFKAGAAEGCNILPLKRCIFSDHLTPVLAYRCLVREDDREAPSFLFESVEQGSEGTNVGRYSVVGAQPAMEIVAKANHVTVMDHKMKSRREQFAPDPMKIPRSIMEQWNPQIVEGLPDAFCGGWVGFFSYDTVRYVETKKLPFSNAPEDDRNLPDIHLGLYNDIVVFDHVEKKTHVIHWVRVDCHESVDEAYEDGKNQLEALLSRLHSVNVPTLTAGSVKLNVGQFGSALQKSSMSREDYKKAVVQAKEHILAGDIFQVVLSQRFERRTFADPFEVYRALRIVNPSPYMAYLQARGCILVASSPEILTRVEKRTIVNRPLAGTIRRGKSKAEDKVLEQLLLSDEKQCAEHIMLVDLGRNDVGKVSKPGSVKVEKLMNVERYSHVMHISSTVTGELRDDLTCWDALRAALPVGTVSGAPKVRAMELIDQMEGKMRGPYSGGFGGVSFRGDMDIALALRTIVFPTGSRFDTMYSYTDKNARQEWVAHLQAGAGIVADSKPDDEHQECLNKAAGLARAIDLAESTFVDE.

Residues 1–34 (MASLVLSLRIAPSTPPLGLGGGRFRGRRGAVACR) constitute a chloroplast transit peptide.

This sequence belongs to the anthranilate synthase component I family. In terms of assembly, heterotetramer consisting of two non-identical subunits: a beta subunit and a large alpha subunit.

It localises to the plastid. Its subcellular location is the chloroplast. It catalyses the reaction chorismate + L-glutamine = anthranilate + pyruvate + L-glutamate + H(+). It functions in the pathway amino-acid biosynthesis; L-tryptophan biosynthesis; L-tryptophan from chorismate: step 1/5. With respect to regulation, feedback inhibition by tryptophan. Functionally, part of a heterotetrameric complex that catalyzes the two-step biosynthesis of anthranilate, an intermediate in the biosynthesis of L-tryptophan. In the first step, the glutamine-binding beta subunit of anthranilate synthase (AS) provides the glutamine amidotransferase activity which generates ammonia as a substrate that, along with chorismate, is used in the second step, catalyzed by the large alpha subunit of AS to produce anthranilate. The protein is Anthranilate synthase alpha subunit 1, chloroplastic (ASA1) of Oryza sativa subsp. indica (Rice).